Here is a 249-residue protein sequence, read N- to C-terminus: Adenosylcobinamide-GDP ribazoletransferase (249 aa).

The next 6 helical transmembrane spans lie at 36–56 (LVGF…HSIG), 57–77 (LNLA…GGLH), 106–126 (VGAM…AFLF), 133–153 (KLTA…LAIT), 188–208 (LWLF…ITWL), and 226–246 (GALG…GQQI).

It belongs to the CobS family. Requires Mg(2+) as cofactor.

Its subcellular location is the cell membrane. The catalysed reaction is alpha-ribazole + adenosylcob(III)inamide-GDP = adenosylcob(III)alamin + GMP + H(+). It catalyses the reaction alpha-ribazole 5'-phosphate + adenosylcob(III)inamide-GDP = adenosylcob(III)alamin 5'-phosphate + GMP + H(+). It participates in cofactor biosynthesis; adenosylcobalamin biosynthesis; adenosylcobalamin from cob(II)yrinate a,c-diamide: step 7/7. Its function is as follows. Joins adenosylcobinamide-GDP and alpha-ribazole to generate adenosylcobalamin (Ado-cobalamin). Also synthesizes adenosylcobalamin 5'-phosphate from adenosylcobinamide-GDP and alpha-ribazole 5'-phosphate. The chain is Adenosylcobinamide-GDP ribazoletransferase from Desulforamulus reducens (strain ATCC BAA-1160 / DSM 100696 / MI-1) (Desulfotomaculum reducens).